Reading from the N-terminus, the 416-residue chain is Homogentisate 1,2-dioxygenase (416 aa).

The active-site Proton acceptor is the His-275. Fe cation-binding residues include His-318 and Glu-324. Residues Tyr-333 and His-354 each contribute to the homogentisate site. A Fe cation-binding site is contributed by His-354.

This sequence belongs to the homogentisate dioxygenase family. Hexamer; dimer of trimers. Fe cation is required as a cofactor.

It catalyses the reaction homogentisate + O2 = 4-maleylacetoacetate + H(+). It functions in the pathway amino-acid degradation; L-phenylalanine degradation; acetoacetate and fumarate from L-phenylalanine: step 4/6. Involved in the catabolism of homogentisate (2,5-dihydroxyphenylacetate or 2,5-OH-PhAc), a central intermediate in the degradation of phenylalanine and tyrosine. Catalyzes the oxidative ring cleavage of the aromatic ring of homogentisate to yield maleylacetoacetate. The sequence is that of Homogentisate 1,2-dioxygenase from Legionella pneumophila (strain Lens).